Consider the following 250-residue polypeptide: Indole-3-glycerol phosphate synthase (250 aa).

The protein belongs to the TrpC family.

The catalysed reaction is 1-(2-carboxyphenylamino)-1-deoxy-D-ribulose 5-phosphate + H(+) = (1S,2R)-1-C-(indol-3-yl)glycerol 3-phosphate + CO2 + H2O. The protein operates within amino-acid biosynthesis; L-tryptophan biosynthesis; L-tryptophan from chorismate: step 4/5. The protein is Indole-3-glycerol phosphate synthase of Bacillus pumilus (strain SAFR-032).